We begin with the raw amino-acid sequence, 135 residues long: Large ribosomal subunit protein uL16c (135 aa).

The protein belongs to the universal ribosomal protein uL16 family. As to quaternary structure, part of the 50S ribosomal subunit.

It localises to the plastid. The protein resides in the chloroplast. In Phaseolus vulgaris (Kidney bean), this protein is Large ribosomal subunit protein uL16c.